Here is a 332-residue protein sequence, read N- to C-terminus: N-arachidonyl glycine receptor (332 aa).

Residues 1 to 26 (MTTPHSQAQPGLPIDPHPDEYKVAAL) are Extracellular-facing. A helical transmembrane segment spans residues 27-47 (VFYSCIFIIGLFVNVTALWVF). The Cytoplasmic portion of the chain corresponds to 48–56 (SCTTKKRTT). Residues 57–77 (VTVYMMNVALLDLVFIMSLPF) form a helical membrane-spanning segment. Topologically, residues 78-95 (RMLYYAKGEWPFGEYFCR) are extracellular. An intrachain disulfide couples C94 to C173. The chain crosses the membrane as a helical span at residues 96 to 116 (ILGALTVFYPSIALWLLAFIS). The Cytoplasmic portion of the chain corresponds to 117–138 (ADRYMAIVQPKYAKELKNTCKA). Residues 139-159 (VMACVGVWIMTLTTTIPLLLL) traverse the membrane as a helical segment. Residues 160 to 192 (YEDPDTASSTPPTCLKISDIIYLKAINALNFTR) lie on the Extracellular side of the membrane. N189 is a glycosylation site (N-linked (GlcNAc...) asparagine). The chain crosses the membrane as a helical span at residues 193 to 213 (LIFFFLIPLFIMIGCYLVIIH). Residues 214 to 233 (SLLHGKTSKLKPKVKEKSIR) are Cytoplasmic-facing. A helical membrane pass occupies residues 234 to 254 (IIITLMVQVLVCFMPFHICFA). The Extracellular segment spans residues 255–269 (FLMLGGDENSYNPWG). A helical membrane pass occupies residues 270–290 (AFTTFLMNLSTCLDVILYYIV). The Cytoplasmic segment spans residues 291–332 (SKQFQARVISVMLYRNYLRSVRRKSFRSGSLRSLSNINSEML). The residue at position 323 (S323) is a Phosphoserine.

This sequence belongs to the G-protein coupled receptor 1 family.

Its subcellular location is the cell membrane. The protein resides in the cytoplasmic vesicle membrane. In terms of biological role, g protein-coupled receptor (GPCR) that plays a role in diverse physiological processes particularly within the immune and nervous systems. Becomes active when triggered by various endogenous ligands including endocannabinoid N-arachidonyl glycine (NAGly), delta-9-tetrahydrocannabinol or resolvin D2/RvD2 derived from the omega-3 fatty acid docosahexaenoic acid (DHA). Upon RvD2 binding, facilitates the resolution of inflammation, aiding in tissue repair and homeostasis. Mechanistically, RvD2 ligation initiates Galphas protein coupling, activation of cAMP-PKA signaling pathway and phosphorylation of STAT3, leading to RvD2-stimulated macrophage phagocytosis. Mediates NAGly-induced process of reorganization of actin filaments and induction of acrosomal exocytosis. Activation by N-arachidonoyl glycine (NAGly) can also induce apoptosis in macrophages. Plays a role in homeostasis of CD8+ subsets of intraepithelial lymphocytes (IELs) (CD8alphaalpha and CD8alphabeta IELs) in small intestine by supporting preferential migration of CD8alphaalpha T-cells to intraepithelial compartment over lamina propria compartment, and by mediating their reconstitution into small intestine after bone marrow transplant. Participates also in hypotensive responses, mediating reduction in intraocular and blood pressure. The protein is N-arachidonyl glycine receptor (GPR18) of Bos taurus (Bovine).